The following is a 112-amino-acid chain: ATP synthase subunit c (112 aa).

A run of 2 helical transmembrane segments spans residues 36–56 (FSVL…AIGM) and 81–101 (MFIA…IALI).

Belongs to the ATPase C chain family. In terms of assembly, F-type ATPases have 2 components, F(1) - the catalytic core - and F(0) - the membrane proton channel. F(1) has five subunits: alpha(3), beta(3), gamma(1), delta(1), epsilon(1). F(0) has three main subunits: a(1), b(2) and c(10-14). The alpha and beta chains form an alternating ring which encloses part of the gamma chain. F(1) is attached to F(0) by a central stalk formed by the gamma and epsilon chains, while a peripheral stalk is formed by the delta and b chains.

It localises to the cell inner membrane. Its function is as follows. F(1)F(0) ATP synthase produces ATP from ADP in the presence of a proton or sodium gradient. F-type ATPases consist of two structural domains, F(1) containing the extramembraneous catalytic core and F(0) containing the membrane proton channel, linked together by a central stalk and a peripheral stalk. During catalysis, ATP synthesis in the catalytic domain of F(1) is coupled via a rotary mechanism of the central stalk subunits to proton translocation. In terms of biological role, key component of the F(0) channel; it plays a direct role in translocation across the membrane. A homomeric c-ring of between 10-14 subunits forms the central stalk rotor element with the F(1) delta and epsilon subunits. The sequence is that of ATP synthase subunit c from Campylobacter jejuni subsp. doylei (strain ATCC BAA-1458 / RM4099 / 269.97).